The sequence spans 251 residues: tRNA pseudouridine synthase A (251 aa).

Residue aspartate 52 is the Nucleophile of the active site. Tyrosine 113 contributes to the substrate binding site.

It belongs to the tRNA pseudouridine synthase TruA family. In terms of assembly, homodimer.

It catalyses the reaction uridine(38/39/40) in tRNA = pseudouridine(38/39/40) in tRNA. Functionally, formation of pseudouridine at positions 38, 39 and 40 in the anticodon stem and loop of transfer RNAs. This chain is tRNA pseudouridine synthase A, found in Brucella anthropi (strain ATCC 49188 / DSM 6882 / CCUG 24695 / JCM 21032 / LMG 3331 / NBRC 15819 / NCTC 12168 / Alc 37) (Ochrobactrum anthropi).